We begin with the raw amino-acid sequence, 268 residues long: Movement protein (268 aa).

The disordered stretch occupies residues 218–246 (SDVRKGKISSSDRSAPNKNYRNVKDFGGM). A compositionally biased stretch (polar residues) spans 225-237 (ISSSDRSAPNKNY).

This sequence belongs to the tobamovirus movement protein family. Binds to host RBCS at the plasmodesmata; this interaction seems required for viral systemic movement. In resistant plants, interacts with host MBP2C at host microtubules; this interaction prevents virus cell to cell movement. In resistant plants, interacts with host resistance (R) protein (e.g. tomato ToMV resistance protein TM-2(2), AC Q71BG9) at the host plasma membrane; this interaction triggers host defense responses leading to programmed cell death.

The protein localises to the host cytoplasm. It is found in the host cytoskeleton. Its subcellular location is the host cell junction. The protein resides in the host plasmodesma. Functionally, transports viral genome to neighboring plant cells directly through plasmosdesmata, without any budding. The movement protein allows efficient cell to cell propagation, by bypassing the host cell wall barrier. Forms a ribonucleoprotein complex with viral RNA. Binds microtubules and modulates microtubule stability. Can bind double-stranded DNA. Triggers host hypersensitive defense reaction in incompatible plants harboring resistance (R) proteins. The polypeptide is Movement protein (MP) (Nicotiana tabacum (Common tobacco)).